The chain runs to 256 residues: Chitinase 11 (256 aa).

The first 22 residues, 1–22 (MRRLLPLAGATLLIAAAGGASG), serve as a signal peptide directing secretion. 2 cysteine pairs are disulfide-bonded: C48–C109 and C214–C247. The active-site Proton donor is the E91.

The protein belongs to the glycosyl hydrolase 19 family. Chitinase class II subfamily. As to expression, expressed in leaves and at lower levels in roots, sheaths and meristems.

The enzyme catalyses Random endo-hydrolysis of N-acetyl-beta-D-glucosaminide (1-&gt;4)-beta-linkages in chitin and chitodextrins.. The sequence is that of Chitinase 11 (Cht11) from Oryza sativa subsp. japonica (Rice).